The sequence spans 34 residues: Photosystem II reaction center protein M (34 aa).

The helical transmembrane segment at Ile5–Leu25 threads the bilayer.

It belongs to the PsbM family. PSII is composed of 1 copy each of membrane proteins PsbA, PsbB, PsbC, PsbD, PsbE, PsbF, PsbH, PsbI, PsbJ, PsbK, PsbL, PsbM, PsbT, PsbX, PsbY, PsbZ, Psb30/Ycf12, at least 3 peripheral proteins of the oxygen-evolving complex and a large number of cofactors. It forms dimeric complexes.

It is found in the plastid. It localises to the chloroplast thylakoid membrane. Functionally, one of the components of the core complex of photosystem II (PSII). PSII is a light-driven water:plastoquinone oxidoreductase that uses light energy to abstract electrons from H(2)O, generating O(2) and a proton gradient subsequently used for ATP formation. It consists of a core antenna complex that captures photons, and an electron transfer chain that converts photonic excitation into a charge separation. This subunit is found at the monomer-monomer interface. This is Photosystem II reaction center protein M from Tupiella akineta (Green alga).